A 265-amino-acid polypeptide reads, in one-letter code: Speedy protein E12 (265 aa).

The tract at residues 1–80 (MGQILGKIMM…EPEKELAPEP (80 aa)) is disordered. Over residues 13 to 23 (QPQPQEEQSPQ) the composition is skewed to low complexity. Residues 66–80 (DESDDEPEKELAPEP) are compositionally biased toward acidic residues.

The protein belongs to the Speedy/Ringo family.

The polypeptide is Speedy protein E12 (Homo sapiens (Human)).